Here is a 309-residue protein sequence, read N- to C-terminus: MSDPNLNDDATEPRGLAADTADDELDIVEAADEQDEFEAAEAEAGEPAEVAALHIEDEGDHIAETDEDIEAGAVETDEDVETDTDEDVEAGTDEDVAVAEAAEEEPAAPVDSIQALREELRTLPGEWYVIHTYAGYENRVKTNLEPRAVSLNVEDYIFQAEVPQEEVVQIKNGDRKTIKQNKLPGYVLVRMDLTNESWGVVRNTPGVTGFVGNAYDPYPLTLDEIVKMLAPEAEEKAARAEGKPAPQRKVEVQVLDFEVGASVTVTDGPFATLQTINEIKSDSKKVKGLVEIFGWETPVELSFDQIQKN.

Disordered stretches follow at residues 1–24 (MSDPNLNDDATEPRGLAADTADDE) and 58–91 (EGDHIAETDEDIEAGAVETDEDVETDTDEDVEAG). The span at 65 to 91 (TDEDIEAGAVETDEDVETDTDEDVEAG) shows a compositional bias: acidic residues.

It belongs to the NusG family.

Functionally, participates in transcription elongation, termination and antitermination. The sequence is that of Transcription termination/antitermination protein NusG from Streptomyces galbus.